A 463-amino-acid polypeptide reads, in one-letter code: MVHSSMGAPEIRMSKPLEAEKQSLDSPSEHTDTERNGPDINHQNPQNKASPFSVSPTGPSTKIKAEDPSGDSAPAAPPPPQPAQPHLPQAQLMLTGSQLAGDIQQLLQLQQLVLVPGHHLQPPAQFLLPQAQQSQPGLLPTPNLFQLPQQTQGALLTSQPRAGLPTQPPKCLEPPSHPEEPSDLEELEQFARTFKQRRIKLGFTQGDVGLAMGKLYGNDFSQTTISRFEALNLSFKNMCKLKPLLEKWLNDAETMSVDSSLPSPNQLSSPSLGFDGLPGRRRKKRTSIETNVRFALEKSFLANQKPTSEEILLIAEQLHMEKEVIRVWFCNRRQKEKRINPCSAAPMLPSPGKPTSYSPHLVTPQGGAGTLPLSQASSSLSTTVTTLSSAVGTLHPSRTAGGGGGGGGAAPPLNSIPSVTPPPPATTNSTNPSPQGSHSAIGLSGLNPSAGPGLWWNPAPYQP.

5 disordered regions span residues Met1 to Leu87, Gln159 to Ser182, Ser259 to Arg282, Pro341 to Ala376, and Thr393 to Pro463. The span at Arg12–Gly37 shows a compositional bias: basic and acidic residues. Over residues Asn41–Ser60 the composition is skewed to polar residues. The span at Ala75–Pro85 shows a compositional bias: pro residues. The POU-specific domain maps to Glu179 to Glu253. The segment covering Ser259–Leu272 has biased composition (low complexity). Residues Arg281 to Asn340 constitute a DNA-binding region (homeobox). The interval Leu373 to Leu394 is leucine-zipper. A compositionally biased stretch (gly residues) spans Ala400–Ala409.

The protein belongs to the POU transcription factor family. Class-2 subfamily. As to quaternary structure, interacts with NR3C1, AR and PGR. Interacts with POU2AF1; the interaction increases POU2F2 transactivation activity. Highest in B cells, but also present in brain (neuronal and glial cells), intestine, kidney, and testes. In terms of tissue distribution, expressed at higher levels in B-cells than in neuronal cells. As to expression, expressed in neuronal cell lines and brain, but not dorsal root ganglia. Expressed at lower levels in neuronal cells than in B cells. In terms of tissue distribution, expressed in neuronal cell lines, and at lower levels in neuroblastoma and dorsal root ganglia. As to expression, widely expressed in the developing nervous system but expression is confined to very specific regions in the adult brain, it is expressed at a lower level in B cells. Either absent in, or expressed at very low levels in neuronal cells and brain. In terms of tissue distribution, expressed in all tissues tested: mammary gland, liver, spleen, lung, kidney intestine, uterus and ovary of a virgin mouse. Levels of isoform OCT2.7 are highest in spleen and lung. In mammary gland, expression is localized to the alveolus epithelial cells.

The protein localises to the cytoplasm. Its subcellular location is the nucleus. With respect to regulation, transactivation activity is enhanced by transcriptional coactivator POU2AF1. Its function is as follows. Transcription factor that specifically binds to the octamer motif (5'-ATTTGCAT-3'). Regulates IL6 expression in B cells with POU2AF1. Regulates transcription in a number of tissues in addition to activating immunoglobulin gene expression. Modulates transcription transactivation by NR3C1, AR and PGR. In terms of biological role, activates octamer-containing promoters. Represses some promoters and activate others. Functionally, represses some promoters and activate others. Activates the U2 small nuclear RNA (snRNA) promoter. Its function is as follows. Unable to bind to the octamer motif, but can still activate the beta-casein gene promoter at low levels. The polypeptide is POU domain, class 2, transcription factor 2 (Mus musculus (Mouse)).